Here is an 89-residue protein sequence, read N- to C-terminus: Small ribosomal subunit protein uS14A (89 aa).

It belongs to the universal ribosomal protein uS14 family. Part of the 30S ribosomal subunit. Contacts proteins S3 and S10.

In terms of biological role, binds 16S rRNA, required for the assembly of 30S particles and may also be responsible for determining the conformation of the 16S rRNA at the A site. The chain is Small ribosomal subunit protein uS14A from Listeria welshimeri serovar 6b (strain ATCC 35897 / DSM 20650 / CCUG 15529 / CIP 8149 / NCTC 11857 / SLCC 5334 / V8).